Here is a 253-residue protein sequence, read N- to C-terminus: Small ribosomal subunit protein uS2 (253 aa).

It belongs to the universal ribosomal protein uS2 family.

This Parvibaculum lavamentivorans (strain DS-1 / DSM 13023 / NCIMB 13966) protein is Small ribosomal subunit protein uS2.